A 107-amino-acid polypeptide reads, in one-letter code: Small ribosomal subunit protein eS25 (107 aa).

Residues 1-35 (MPPKQQLSKAAKAAAAMAGGKKSKKKWSKKSHKDK) are disordered. Over residues 8-20 (SKAAKAAAAMAGG) the composition is skewed to low complexity. A compositionally biased stretch (basic residues) spans 21-35 (KKSKKKWSKKSHKDK).

It belongs to the eukaryotic ribosomal protein eS25 family.

This Candida glabrata (strain ATCC 2001 / BCRC 20586 / JCM 3761 / NBRC 0622 / NRRL Y-65 / CBS 138) (Yeast) protein is Small ribosomal subunit protein eS25 (RPS25).